An 85-amino-acid polypeptide reads, in one-letter code: Mitochondrial import inner membrane translocase subunit TIM9 (85 aa).

The short motif at 35–59 (CFTDCVNDFTSKALSSREESCLEKC) is the Twin CX3C motif element. 2 cysteine pairs are disulfide-bonded: Cys-35/Cys-59 and Cys-39/Cys-55.

This sequence belongs to the small Tim family. As to quaternary structure, heterohexamer; composed of 3 copies of TIM9 and 3 copies of TIM10, named soluble 70 kDa complex. Associates with the TIM22 complex, whose core is composed of TIM22 and TIM54. Interacts with the transmembrane regions of multi-pass transmembrane proteins in transit.

The protein resides in the mitochondrion inner membrane. Functionally, mitochondrial intermembrane chaperone that participates in the import and insertion of multi-pass transmembrane proteins into the mitochondrial inner membrane. Also required for the transfer of beta-barrel precursors from the TOM complex to the sorting and assembly machinery (SAM complex) of the outer membrane. Acts as a chaperone-like protein that protects the hydrophobic precursors from aggregation and guide them through the mitochondrial intermembrane space. This Yarrowia lipolytica (strain CLIB 122 / E 150) (Yeast) protein is Mitochondrial import inner membrane translocase subunit TIM9 (TIM9).